The following is a 687-amino-acid chain: Amine oxidase [copper-containing] gamma 2 (687 aa).

Positions 1 to 24 are cleaved as a signal peptide; sequence MVELSFSQLLVLLLSLLFLFTTLA. N-linked (GlcNAc...) asparagine glycosylation occurs at Asn-154. A disulfide bond links Cys-169 and Cys-191. A glycan (N-linked (GlcNAc...) asparagine) is linked at Asn-244. 333-344 is a binding site for substrate; sequence YMDAGEFGLGPS. Asp-335 (proton acceptor) is an active-site residue. A disulfide bridge connects residues Cys-354 and Cys-380. Residue 420-425 coordinates substrate; sequence VGNYDY. Residue Tyr-423 is the Schiff-base intermediate with substrate; via topaquinone of the active site. Tyr-423 is subject to 2',4',5'-topaquinone. Residues His-480 and His-482 each contribute to the Cu cation site. 3 residues coordinate Mn(2+): Asp-489, Met-490, and Asp-491. N-linked (GlcNAc...) asparagine glycans are attached at residues Asn-497 and Asn-598. Residues Asp-632 and Ile-633 each coordinate Mn(2+). Cu cation is bound at residue His-643.

The protein belongs to the copper/topaquinone oxidase family. Homodimer. Requires Cu cation as cofactor. Zn(2+) is required as a cofactor. The cofactor is L-topaquinone. Mn(2+) serves as cofactor. In terms of processing, topaquinone (TPQ) is generated by copper-dependent autoxidation of a specific tyrosyl residue. In terms of tissue distribution, expressed in roots, leaves and cotyledons.

It localises to the secreted. It is found in the extracellular space. The protein localises to the apoplast. It catalyses the reaction a primary methyl amine + O2 + H2O = an aldehyde + H2O2 + NH4(+). The protein operates within amine and polyamine degradation; putrescine degradation. Its function is as follows. Copper amine oxidase that can use putrescine and spermidine as substrates. The chain is Amine oxidase [copper-containing] gamma 2 from Arabidopsis thaliana (Mouse-ear cress).